We begin with the raw amino-acid sequence, 146 residues long: Decoration protein (146 aa).

In terms of assembly, homotrimer. Interacts with the major capsid protein.

It localises to the virion. In terms of biological role, cooperatively binds the expanded capsid, thereby stabilizing the mature capsid shell and allowing the large viral DNA to be packaged. Trimers of capsid decoration proteins molecules are located at local and icosahedral threefold axes and stabilize the expanded capsid, which shows increased spacing between capsomers. The chain is Decoration protein from Thermus thermophilus (Thermus thermophilus phage P23-45).